The following is a 298-amino-acid chain: Protoheme IX farnesyltransferase (298 aa).

9 helical membrane-spanning segments follow: residues 26-46 (VVGHIVFTAIIGMFLAVPGVP), 52-72 (FWASLGIGFAAASAAALNHFL), 98-118 (VVGFALVLGIVAMAILIAFVN), 120-140 (LTAFLTFLSLIGYAVIYTVYL), 148-168 (IVIGGAAGAAPPVLGWCAVTG), 174-194 (ALLLFLLIFVWTPPHFWAYAI), 214-234 (IAFTQLHILLYTILLFLAGLM), 241-261 (SGEIYLAAALIFGGIFVYYAI), and 278-298 (YSLVYLVGIFSALLVDHYIVL).

It belongs to the UbiA prenyltransferase family. Protoheme IX farnesyltransferase subfamily.

The protein resides in the cell inner membrane. The catalysed reaction is heme b + (2E,6E)-farnesyl diphosphate + H2O = Fe(II)-heme o + diphosphate. Its pathway is porphyrin-containing compound metabolism; heme O biosynthesis; heme O from protoheme: step 1/1. Functionally, converts heme B (protoheme IX) to heme O by substitution of the vinyl group on carbon 2 of heme B porphyrin ring with a hydroxyethyl farnesyl side group. This chain is Protoheme IX farnesyltransferase, found in Methylococcus capsulatus (strain ATCC 33009 / NCIMB 11132 / Bath).